The chain runs to 216 residues: Probable nicotinate-nucleotide adenylyltransferase (216 aa).

It belongs to the NadD family.

It catalyses the reaction nicotinate beta-D-ribonucleotide + ATP + H(+) = deamido-NAD(+) + diphosphate. It participates in cofactor biosynthesis; NAD(+) biosynthesis; deamido-NAD(+) from nicotinate D-ribonucleotide: step 1/1. Its function is as follows. Catalyzes the reversible adenylation of nicotinate mononucleotide (NaMN) to nicotinic acid adenine dinucleotide (NaAD). This chain is Probable nicotinate-nucleotide adenylyltransferase, found in Klebsiella pneumoniae (strain 342).